The following is a 1312-amino-acid chain: DNA repair protein RAD50 (1312 aa).

Residues arginine 13, asparagine 38, glycine 39, glycine 41, lysine 42, threonine 43, threonine 44, valine 67, aspartate 69, and glutamine 159 each contribute to the ATP site. Residue threonine 43 participates in Mg(2+) binding. Glutamine 159 is a binding site for Mg(2+). Coiled-coil stretches lie at residues threonine 228–arginine 359, arginine 401–asparagine 598, and serine 635–leucine 673. Serine 635 bears the Phosphoserine; by ATM mark. One can recognise a Zinc-hook domain in the interval serine 635–proline 734. Zn(2+)-binding residues include cysteine 681 and cysteine 684. A Phosphothreonine modification is found at threonine 690. Coiled-coil stretches lie at residues arginine 706 to proline 734 and leucine 789 to lysine 1079. Lysine 959 carries the post-translational modification N6-acetyllysine.

It belongs to the SMC family. RAD50 subfamily. As to quaternary structure, component of the MRN complex composed of two heterodimers RAD50 and MRE11 associated with a single NBN. The MRN complexes dimerize on DNA to form joined MRN-MRN oligomers required for DNA double-strand break repair. As part of the MRN complex, interacts with MCM8 and MCM9; the interaction recruits the complex to DNA repair sites. Component of the BASC complex, at least composed of BRCA1, MSH2, MSH6, MLH1, ATM, BLM, RAD50, MRE11 and NBN. Found in a complex with TERF2. Interacts with RINT1. Interacts with BRCA1 via its N-terminal domain. Interacts with DCLRE1C/Artemis. Interacts with MRNIP. Interacts with CYREN (via XLF motif). Interacts with C1QBP and MRE11; interaction takes place in absence of DNA damage to form the MRC (MRE11-RAD50-C1QBP) complex that inhibits the activity of MRE11. (Microbial infection) Interacts with herpes simplex virus 1 protein UL12. Zn(2+) serves as cofactor. In terms of processing, phosphorylation at Ser-635 by ATM in response to DNA damage is required for double-strand break (DSB) repair. As to expression, expressed at very low level in most tissues, except in testis where it is expressed at higher level. Expressed in fibroblasts.

Its subcellular location is the nucleus. It is found in the chromosome. The protein localises to the telomere. It catalyses the reaction ATP + H2O = ADP + phosphate + H(+). In terms of biological role, component of the MRN complex, which plays a central role in double-strand break (DSB) repair, DNA recombination, maintenance of telomere integrity and meiosis. The MRN complex is involved in the repair of DNA double-strand breaks (DSBs) via homologous recombination (HR), an error-free mechanism which primarily occurs during S and G2 phases. The complex (1) mediates the end resection of damaged DNA, which generates proper single-stranded DNA, a key initial steps in HR, and is (2) required for the recruitment of other repair factors and efficient activation of ATM and ATR upon DNA damage. The MRN complex possesses single-strand endonuclease activity and double-strand-specific 3'-5' exonuclease activity, which are provided by MRE11, to initiate end resection, which is required for single-strand invasion and recombination. Within the complex, RAD50 is both required to bind DNA ends and hold them in close proximity and regulate the activity of MRE11. RAD50 provides an ATP-dependent control of MRE11 by positioning DNA ends into the MRE11 active site: ATP-binding induces a large structural change from an open form with accessible MRE11 nuclease sites into a closed form. The MRN complex is also required for DNA damage signaling via activation of the ATM and ATR kinases: the nuclease activity of MRE11 is not required to activate ATM and ATR. The MRN complex is also required for the processing of R-loops. In telomeres the MRN complex may modulate t-loop formation. The chain is DNA repair protein RAD50 from Homo sapiens (Human).